A 27-amino-acid chain; its full sequence is MSKNTKSKNNGIRKYNAKTEVKLVYFK.

This chain is Protein YqfI, found in Escherichia coli (strain K12).